A 276-amino-acid polypeptide reads, in one-letter code: NADPH-dependent 7-cyano-7-deazaguanine reductase (276 aa).

Residue 83–85 (IES) coordinates substrate. 85 to 86 (SK) is a binding site for NADPH. Cysteine 184 functions as the Thioimide intermediate in the catalytic mechanism. Aspartate 191 serves as the catalytic Proton donor. 223-224 (HE) contacts substrate. An NADPH-binding site is contributed by 252-253 (RG).

It belongs to the GTP cyclohydrolase I family. QueF type 2 subfamily. As to quaternary structure, homodimer.

It localises to the cytoplasm. It carries out the reaction 7-aminomethyl-7-carbaguanine + 2 NADP(+) = 7-cyano-7-deazaguanine + 2 NADPH + 3 H(+). It participates in tRNA modification; tRNA-queuosine biosynthesis. Its function is as follows. Catalyzes the NADPH-dependent reduction of 7-cyano-7-deazaguanine (preQ0) to 7-aminomethyl-7-deazaguanine (preQ1). This is NADPH-dependent 7-cyano-7-deazaguanine reductase from Pseudomonas savastanoi pv. phaseolicola (strain 1448A / Race 6) (Pseudomonas syringae pv. phaseolicola (strain 1448A / Race 6)).